Consider the following 155-residue polypeptide: MRRRKAPVREVLGDPVYGNKVVTKFINKMMYDGKKSVAEKIIYKAFNKIEEKSGEKGIEVFEKALERVRPLVEVRSRRVGGATYQVPVEVRASRQQSLSIRWILEATRKRNERMMVDRLANELMDAASDKGAAFKKKEDVHKMAEANKAFAHYRW.

Belongs to the universal ribosomal protein uS7 family. In terms of assembly, part of the 30S ribosomal subunit. Contacts proteins S9 and S11.

Its function is as follows. One of the primary rRNA binding proteins, it binds directly to 16S rRNA where it nucleates assembly of the head domain of the 30S subunit. Is located at the subunit interface close to the decoding center, probably blocks exit of the E-site tRNA. The polypeptide is Small ribosomal subunit protein uS7 (Helicobacter pylori (strain Shi470)).